A 348-amino-acid polypeptide reads, in one-letter code: CCAAT/enhancer-binding protein beta (348 aa).

The interval 1 to 24 is required for Lys-174 sumoylation; the sequence is MQRLVVWDPVCLPLPPPPPAFKSM. Position 3 is an asymmetric dimethylarginine; by CARM1 (arginine 3). Positions 24 to 135 are required for MYC transcriptional repression; it reads MEVANFYYEA…YGGKNCKKAA (112 aa). Lysine 43 is modified (N6-acetyllysine; alternate). N6-methylated lysine; alternate is present on lysine 43. Disordered stretches follow at residues 44-65 and 79-112; these read AAPA…ELGS and LEPL…ASSG. The span at 47 to 59 shows a compositional bias: pro residues; it reads AAPPADRPGPRPP. The 9aaTAD motif lies at 116-124; the sequence is DFLSDLFSD. Residues lysine 129 and lysine 132 each carry the N6-acetyllysine; by KAT2A and KAT2B modification. Lysine 133 carries the N6-acetyllysine; by KAT2A and KAT2B; alternate modification. Lysine 133 participates in a covalent cross-link: Glycyl lysine isopeptide (Lys-Gly) (interchain with G-Cter in SUMO2); alternate. Positions 158–178 are disordered; it reads APLHPPPPPPPPPAELKAEPG. Pro residues predominate over residues 160-171; it reads LHPPPPPPPPPA. Residue lysine 174 forms a Glycyl lysine isopeptide (Lys-Gly) (interchain with G-Cter in SUMO2); alternate linkage. A Glycyl lysine isopeptide (Lys-Gly) (interchain with G-Cter in SUMO); alternate cross-link involves residue lysine 174. Residues lysine 185 and lysine 187 each participate in a glycyl lysine isopeptide (Lys-Gly) (interchain with G-Cter in SUMO2) cross-link. Over residues 219 to 259 the composition is skewed to low complexity; it reads SGSSGSLSTSSSSSPPGTPSPADAKATPAAAACYAGAAPAP. The segment at 219–277 is disordered; it reads SGSSGSLSTSSSSSPPGTPSPADAKATPAAAACYAGAAPAPSQVKSKAKKTVDKHSDEY. Threonine 227 bears the Phosphothreonine; by GSK3-beta mark. O-linked (GlcNAc) serine glycans are attached at residues serine 228 and serine 229. The residue at position 232 (serine 232) is a Phosphoserine; by GSK3-beta. Threonine 236 is modified (phosphothreonine; by RPS6KA1, CDK2 and MAPK). Glycyl lysine isopeptide (Lys-Gly) (interchain with G-Cter in SUMO2) cross-links involve residues lysine 263 and lysine 265. Residues 268-277 show a composition bias toward basic and acidic residues; it reads KTVDKHSDEY. Position 269 is a phosphothreonine; by RPS6KA1 and PKC/PRKCA (threonine 269). Residues 274-337 enclose the bZIP domain; sequence SDEYKIRRER…STLRNLFKTL (64 aa). Residues 278–298 form a basic motif region; sequence KIRRERNNIAVRKSRDKAKMR. At serine 291 the chain carries Phosphoserine; by PKC/PRKCA. The interval 300 to 307 is leucine-zipper; it reads LETQHKVL. Serine 328 is modified (phosphoserine; by CaMK2). Residue lysine 335 forms a Glycyl lysine isopeptide (Lys-Gly) (interchain with G-Cter in SUMO2) linkage.

The protein belongs to the bZIP family. C/EBP subfamily. In terms of assembly, binds DNA as a homodimer and as a heterodimer. Interacts with ATF4. Binds DNA as a heterodimer with ATF4. Interacts with MYB; within the complex, MYB and CEBPB bind to different promoter regions. Can form stable heterodimers with CEBPA, CEBPD and CEBPG. Interacts with SIX1. Interacts with TRIM28 and PTGES2. Interacts with PRDM16. Interacts with CCDC85B. Forms a complex with THOC5. Interacts with ZNF638; this interaction increases transcriptional activation. Interacts with CIDEA and CIDEC; these interactions increase transcriptional activation of a subset of CEBPB downstream target genes. Interacts with DDIT3/CHOP. Interacts with EP300; recruits EP300 to chromatin. Interacts with RORA; the interaction disrupts interaction with EP300. Interacts (not methylated) with MED23, MED26, SMARCA2, SMARCB1 and SMARCC1. Interacts with KAT2A and KAT2B. Interacts with ATF5; EP300 is required for ATF5 and CEBPB interaction and DNA binding. Interacts with NFE2L1; the heterodimer represses expression of DSPP during odontoblast differentiation. In terms of processing, methylated. Methylation at Arg-3 by CARM1 and at Lys-43 by EHMT2 inhibit transactivation activity. Methylation is probably inhibited by phosphorylation at Thr-236. Post-translationally, sumoylated by polymeric chains of SUMO2 or SUMO3. Sumoylation at Lys-174 is required for inhibition of T-cells proliferation. In adipocytes, sumoylation at Lys-174 by PIAS1 leads to ubiquitination and subsequent proteasomal degradation. Desumoylated by SENP2, which abolishes ubiquitination and stabilizes protein levels. Ubiquitinated, leading to proteasomal degradation. In terms of processing, phosphorylated at Thr-236 by MAPK and CDK2, serves to prime phosphorylation at Thr-227 and Ser-232 by GSK3B and acquire DNA-binding as well as transactivation activities, required to induce adipogenesis. MAPK and CDK2 act sequentially to maintain Thr-236 in the primed phosphorylated state during mitotical cloning expansion and thereby progression of terminal differentiation. Phosphorylation at Thr-269 enhances transactivation activity. Phosphorylation at Ser-328 in response to calcium increases transactivation activity. Phosphorylated at Thr-236 by RPS6KA1. Post-translationally, O-glycosylated, glycosylation at Ser-228 and Ser-229 prevents phosphorylation on Thr-236, Ser-232 and Thr-227 and DNA binding activity which delays the adipocyte differentiation program. Acetylated. Acetylation at Lys-43 is an important and dynamic regulatory event that contributes to its ability to transactivate target genes, including those associated with adipogenesis and adipocyte function. Deacetylation by HDAC1 represses its transactivation activity. Acetylated by KAT2A and KAT2B within a cluster of lysine residues between amino acids 129-133, this acetylation is strongly induced by glucocorticoid treatment and enhances transactivation activity.

The protein localises to the nucleus. It localises to the cytoplasm. In terms of biological role, important transcription factor regulating the expression of genes involved in immune and inflammatory responses. Also plays a significant role in adipogenesis, as well as in the gluconeogenic pathway, liver regeneration, and hematopoiesis. The consensus recognition site is 5'-T[TG]NNGNAA[TG]-3'. Its functional capacity is governed by protein interactions and post-translational protein modifications. During early embryogenesis, plays essential and redundant roles with CEBPA. Has a promitotic effect on many cell types such as hepatocytes and adipocytes but has an antiproliferative effect on T-cells by repressing MYC expression, facilitating differentiation along the T-helper 2 lineage. Binds to regulatory regions of several acute-phase and cytokines genes and plays a role in the regulation of acute-phase reaction and inflammation. Also plays a role in intracellular bacteria killing. During adipogenesis, is rapidly expressed and, after activation by phosphorylation, induces CEBPA and PPARG, which turn on the series of adipocyte genes that give rise to the adipocyte phenotype. The delayed transactivation of the CEBPA and PPARG genes by CEBPB appears necessary to allow mitotic clonal expansion and thereby progression of terminal differentiation. Essential for female reproduction because of a critical role in ovarian follicle development. Restricts osteoclastogenesis: together with NFE2L1; represses expression of DSPP during odontoblast differentiation. This chain is CCAAT/enhancer-binding protein beta (CEBPB), found in Bos taurus (Bovine).